Consider the following 678-residue polypeptide: DNA ligase (678 aa).

NAD(+)-binding positions include aspartate 36–aspartate 40, serine 85–leucine 86, and glutamate 117. Lysine 119 acts as the N6-AMP-lysine intermediate in catalysis. Residues arginine 140, glutamate 177, lysine 294, and lysine 318 each coordinate NAD(+). 4 residues coordinate Zn(2+): cysteine 412, cysteine 415, cysteine 430, and cysteine 436. Residues alanine 595–valine 678 enclose the BRCT domain.

Belongs to the NAD-dependent DNA ligase family. LigA subfamily. Mg(2+) is required as a cofactor. Mn(2+) serves as cofactor.

It carries out the reaction NAD(+) + (deoxyribonucleotide)n-3'-hydroxyl + 5'-phospho-(deoxyribonucleotide)m = (deoxyribonucleotide)n+m + AMP + beta-nicotinamide D-nucleotide.. Its function is as follows. DNA ligase that catalyzes the formation of phosphodiester linkages between 5'-phosphoryl and 3'-hydroxyl groups in double-stranded DNA using NAD as a coenzyme and as the energy source for the reaction. It is essential for DNA replication and repair of damaged DNA. This chain is DNA ligase, found in Marinobacter nauticus (strain ATCC 700491 / DSM 11845 / VT8) (Marinobacter aquaeolei).